The chain runs to 148 residues: SsrA-binding protein (148 aa).

The protein belongs to the SmpB family.

It localises to the cytoplasm. Required for rescue of stalled ribosomes mediated by trans-translation. Binds to transfer-messenger RNA (tmRNA), required for stable association of tmRNA with ribosomes. tmRNA and SmpB together mimic tRNA shape, replacing the anticodon stem-loop with SmpB. tmRNA is encoded by the ssrA gene; the 2 termini fold to resemble tRNA(Ala) and it encodes a 'tag peptide', a short internal open reading frame. During trans-translation Ala-aminoacylated tmRNA acts like a tRNA, entering the A-site of stalled ribosomes, displacing the stalled mRNA. The ribosome then switches to translate the ORF on the tmRNA; the nascent peptide is terminated with the 'tag peptide' encoded by the tmRNA and targeted for degradation. The ribosome is freed to recommence translation, which seems to be the essential function of trans-translation. This Ehrlichia ruminantium (strain Welgevonden) protein is SsrA-binding protein.